The following is a 912-amino-acid chain: Transferrin-binding protein A (912 aa).

Positions 1 to 23 are cleaved as a signal peptide; that stretch reads MTKKPYFRLSIISCLLISCYVKA. The TonB box motif lies at 50–57; sequence ETISVTAE. One can recognise a TBDR plug domain in the interval 63–188; the sequence is KDNEVTGLGK…LAGSVTFQSK (126 aa). Residues 199–912 enclose the TBDR beta-barrel domain; that stretch reads SWGIQTKNAY…NYTLTLEMKF (714 aa). The short motif at 895 to 912 is the TonB C-terminal box element; sequence TRYAASGRNYTLTLEMKF.

This sequence belongs to the TonB-dependent receptor family.

The protein localises to the cell outer membrane. Its function is as follows. Haemophilus acquires iron by extracting it from serum transferrin (TF) in its human host. Acts as a transferrin receptor and is required for transferrin utilization. This Haemophilus influenzae (strain ATCC 51907 / DSM 11121 / KW20 / Rd) protein is Transferrin-binding protein A.